Reading from the N-terminus, the 1221-residue chain is MVLKRAADMVPKGFRDLVEPILDDCADLEELADRVVETEMEPDEVRRRDVGNTDSNEPVAIFGSSCVLCGGDCSSVRLTSRIGICERCLPVDTETLREVLKEARKRHGYVGEALLMFILVERYSPDRVEEFFRRYVWPELFTEIVDRVFDRATGFRLYSAQRVWTRRLVKGCSFSILAPTGTGKTSWGSLVAAVFGHAGRRVYYLVPTTTLVRQVENRIKGFARDAELDVDVVAYHAAMPTQAKREALERISSGDFDVLITTAQFLVHRVEDLEKLNFDLILVDDVDAIIRGTGRNVDRVLRVAGLEQEEIDSAYRLATLRRRYYSLRDWLRSLEDRGDKRAERVREELREVEREIEELEELLKRVKKERDLARIVFMSATGAAAPSRRLAVVRELFDFEVGAGGEGLRNIQDIAVISEPSPEAVERIVRKAGVKGGLIFVPQRLPGEKKAREIVEELAEHLRSSGIEARAIHAGTPAEEREEAIDGFSEGDVDVLVAVASPYGVIVRGLDLPQAARYAVFYGVPRQRIRLTPREEDLKDPTYVASALSNLARLLDDRRARSRLEGVAGRLWRIIRRGTWIRERLEEAVEPLSLNTLMKLAKRDPEDIAEQLDVDRWLARHVQTLAEGVRELTRLLGDPDRVKALAEEATTVAVYEEGEEAYLEVPDLRTYIQASGRVSRLFAGGVTFGLSFVLCPEDERELRTLNGLIRRMSYTYGSEFEWRSYPKSLDMKEIGLELKEISDEELEELVRKVDEDRERVRKVLAGELKPEETGRLARSALMIVESPNKARMIASLFSQRPSRRRLNGGVAYEAAADGLHLTVVATQGHVADLVEEPGVHGVLRIDERWVPMYDVLGRCSECGEQVVGSEECPNCGGEVELKTPLLESIRELASEADVILIGTDPDTEGEKIGWDVFNYLGWTTAQVYRTEFHEVTRRGISEALKEESWKNVDAGRVSAQILRRVADRWIGFSLSQDLWDVFKHLEIKLGELPSGSRIEVRLDIPSGVEVVDFRRTFDEDSSVRSRSVRLRREGDEYVVRTRISRGGDVTYTATLLDPNRKLGDRNGVRPELVRVRASVNGEPVDPNVKLEPMTWLSAGRVQTPVLGWIIDRAREYRETEFYACRAEVPADDVTIRALIEELKVPRALTEKLDEATIRVLSKIAEEGPDAEFSEEEVGRFTETELFERKDGRYRLSEEGRKVLESEGVIGLMLHLAGVSGR.

Residues 56–97 form an RG N-terminal-type zinc finger; the sequence is NEPVAIFGSSCVLCGGDCSSVRLTSRIGICERCLPVDTETLR. Zn(2+) is bound by residues Cys-66, Cys-69, Cys-85, and Cys-88. ATP is bound by residues Gln-161 and 178-185; that span reads APTGTGKT. The Helicase ATP-binding domain maps to 165 to 400; it reads TRRLVKGCSF…AVVRELFDFE (236 aa). The DEAD box signature appears at 284–287; it reads DDVD. The Helicase C-terminal domain maps to 424-600; that stretch reads AVERIVRKAG…PLSLNTLMKL (177 aa). A Toprim domain is found at 779–935; sequence SALMIVESPN…QVYRTEFHEV (157 aa). Glu-785 provides a ligand contact to Mg(2+). The RG C-terminal-type zinc-finger motif lies at 856 to 882; sequence LGRCSECGEQVVGSEECPNCGGEVELK. Positions 859, 862, 872, and 875 each coordinate Zn(2+). Residue Asp-904 participates in Mg(2+) binding. Positions 953–1221 constitute a Topo IA-type catalytic domain; it reads DAGRVSAQIL…MLHLAGVSGR (269 aa).

The protein in the C-terminal section; belongs to the type IA topoisomerase family. This sequence in the N-terminal section; belongs to the DEAD box helicase family. DDVD subfamily. In terms of assembly, heterodimer of an RgyrA and RgyrB subunit. The topoisomerase domain is shared between the two subunits. It depends on Zn(2+) as a cofactor. Requires Mg(2+) as cofactor. Post-translationally, the N-terminus is partially blocked.

It localises to the cytoplasm. It carries out the reaction ATP + H2O = ADP + phosphate + H(+). Its function is as follows. Modifies the topological state of DNA by introducing positive supercoils in an ATP-dependent process; dATP also allows positive supercoiling. Increases the linking number in steps of +1. Only this subunit binds ATP, it does so in a DNA- and RgyA-independent manner. Hydrolyzes ATP only in the presence of DNA. The RgyA subunit transiently cleaves a single DNA strand and remains covalently bound to the 5' DNA end probably through a tyrosine residue. It changes linking number in steps of one, and nicks DNA preferentially at 5'-CNNN | 3'-sites with a strong preference for 4 pyrimidine residues. There are about 1000 heterodimers per cell. May be involved in rewinding the DNA strands in the regions of the chromosome that have opened up to allow transcription or replication. In terms of biological role, this subunit expressed in E.coli only has DNA-dependent ATPase activity at 80 degrees Celsius. Reverse gyrase activity is reconstituted after incubation at 80 degrees Celsius for 5 minutes, positive supercoiling requires ATP and Mg(2+). In the presence of ATP it binds and nicks substrate but does not make closed product. This chain is Reverse gyrase subunit B, found in Methanopyrus kandleri (strain AV19 / DSM 6324 / JCM 9639 / NBRC 100938).